A 427-amino-acid chain; its full sequence is Light-independent protochlorophyllide reductase subunit N (427 aa).

Residues Cys-30, Cys-55, and Cys-116 each coordinate [4Fe-4S] cluster.

It belongs to the BchN/ChlN family. Protochlorophyllide reductase is composed of three subunits; BchL, BchN and BchB. Forms a heterotetramer of two BchB and two BchN subunits. [4Fe-4S] cluster serves as cofactor.

The catalysed reaction is chlorophyllide a + oxidized 2[4Fe-4S]-[ferredoxin] + 2 ADP + 2 phosphate = protochlorophyllide a + reduced 2[4Fe-4S]-[ferredoxin] + 2 ATP + 2 H2O. Its pathway is porphyrin-containing compound metabolism; bacteriochlorophyll biosynthesis (light-independent). Its function is as follows. Component of the dark-operative protochlorophyllide reductase (DPOR) that uses Mg-ATP and reduced ferredoxin to reduce ring D of protochlorophyllide (Pchlide) to form chlorophyllide a (Chlide). This reaction is light-independent. The NB-protein (BchN-BchB) is the catalytic component of the complex. This Rhodopseudomonas palustris (strain BisA53) protein is Light-independent protochlorophyllide reductase subunit N.